We begin with the raw amino-acid sequence, 300 residues long: F-box protein SKIP1 (300 aa).

Residues L11–F52 enclose the F-box; degenerate domain.

In terms of assembly, part of a SCF (ASK-cullin-F-box) protein ligase complex. Interacts with SKP1A/ASK1 and SKP1B/ASK2.

It is found in the nucleus. It participates in protein modification; protein ubiquitination. Functionally, component of SCF(ASK-cullin-F-box) E3 ubiquitin ligase complexes, which may mediate the ubiquitination and subsequent proteasomal degradation of target proteins. This is F-box protein SKIP1 (SKIP1) from Arabidopsis thaliana (Mouse-ear cress).